Consider the following 869-residue polypeptide: Programmed cell death 6-interacting protein (869 aa).

Alanine 2 bears the N-acetylalanine mark. The region spanning 3–392 is the BRO1 domain; that stretch reads SFIWVQLKKT…AQMREATTLA (390 aa). The interval 176 to 503 is interaction with CHMP4A, CHMP4B and CHMP4C; that stretch reads TVDISPDTVG…KFRAVLDKAV (328 aa). Lysine 215 bears the N6-acetyllysine mark. Positions 383–869 are interaction with SDCBP; that stretch reads AQMREATTLA…PPQQSYYPQQ (487 aa). Threonine 479 carries the phosphothreonine modification. Phosphoserine is present on serine 481. The interval 503-869 is self-association; that stretch reads VQADGQVKER…PPQQSYYPQQ (367 aa). Disordered stretches follow at residues 715–808 and 838–869; these read REPS…PTYP and YHQS…YPQQ. The segment at 717-720 is interaction with TSG101; it reads PSAP. Serine 730 is modified (phosphoserine). Over residues 739-763 the composition is skewed to pro residues; the sequence is PPTPAPRTMPPAKPQPPARPPPPVL. A Phosphothreonine modification is found at threonine 741. Arginine 745 bears the Omega-N-methylarginine mark. Low complexity predominate over residues 764-787; that stretch reads PANRVPPASAAAAPAGVGTASAAP. 2 stretches are compositionally biased toward pro residues: residues 788-808 and 845-861; these read PQTP…PTYP and APYP…PQPP. The tract at residues 798 to 807 is interaction with CEP55; it reads QAQGPPYPTY.

In terms of assembly, self-associates. Interacts with SH3KBP1. Interacts with PDCD6 in a calcium-dependent manner. Interacts with TSG101 in a calcium-dependent manner; PDCD6IP homooligomerization may be required for TSG101-binding. Interacts with SGSM3. Directly interacts with CHMP4A, CHMP4B and CHMP4C. Directly interacts with CEP55 in a 1:2 stoechiometry; this interaction is required for PDCD6IP targeting to the midbody. May interact with PDGFRB. Interacts with SH3GL1 and SH3GL2/endophilin-1. Forms a complex with SDCBP and SDC2. Found in a complex with F-actin, TJP1/ZO-1 and PARD3. Interacts with CD2AP. Interacts with ARRDC1. Interacts (via BRO1 domain) with the ATG12-ATG3 conjugat; this interaction is bridged by ATG12 and promotes multiple PDCD6IP-mediated functions such as endolysosomal trafficking, macroautophagy and exosome biogenesis. Post-translationally, may be phosphorylated on tyrosine residues by activated PDGFRB. Ubiquitously expressed. High expression in choroid plexus and low expression in cerebral cortex (at protein level).

It is found in the cytoplasm. Its subcellular location is the cytosol. The protein resides in the melanosome. The protein localises to the cytoskeleton. It localises to the microtubule organizing center. It is found in the centrosome. Its subcellular location is the secreted. The protein resides in the extracellular exosome. The protein localises to the cell junction. It localises to the tight junction. It is found in the midbody. Its subcellular location is the midbody ring. Multifunctional protein involved in endocytosis, multivesicular body biogenesis, membrane repair, cytokinesis, apoptosis and maintenance of tight junction integrity. Class E VPS protein involved in concentration and sorting of cargo proteins of the multivesicular body (MVB) for incorporation into intralumenal vesicles (ILVs) that are generated by invagination and scission from the limiting membrane of the endosome. Binds to the phospholipid lysobisphosphatidic acid (LBPA) which is abundant in MVBs internal membranes. The MVB pathway requires the sequential function of ESCRT-O, -I,-II and -III complexes. The ESCRT machinery also functions in topologically equivalent membrane fission events, such as the terminal stages of cytokinesis. Adapter for a subset of ESCRT-III proteins, such as CHMP4, to function at distinct membranes. Required for completion of cytokinesis. May play a role in the regulation of both apoptosis and cell proliferation. Regulates exosome biogenesis in concert with SDC1/4 and SDCBP. By interacting with F-actin, PARD3 and TJP1 secures the proper assembly and positioning of actomyosin-tight junction complex at the apical sides of adjacent epithelial cells that defines a spatial membrane domain essential for the maintenance of epithelial cell polarity and barrier. The sequence is that of Programmed cell death 6-interacting protein from Mus musculus (Mouse).